The primary structure comprises 450 residues: Glucose-6-phosphate isomerase (450 aa).

A Phosphothreonine modification is found at Thr39. Glu291 functions as the Proton donor in the catalytic mechanism. Active-site residues include His312 and Lys426.

Belongs to the GPI family.

Its subcellular location is the cytoplasm. It carries out the reaction alpha-D-glucose 6-phosphate = beta-D-fructose 6-phosphate. Its pathway is carbohydrate biosynthesis; gluconeogenesis. The protein operates within carbohydrate degradation; glycolysis; D-glyceraldehyde 3-phosphate and glycerone phosphate from D-glucose: step 2/4. Functionally, catalyzes the reversible isomerization of glucose-6-phosphate to fructose-6-phosphate. The sequence is that of Glucose-6-phosphate isomerase from Bacillus thuringiensis (strain Al Hakam).